The sequence spans 498 residues: Aldehyde dehydrogenase, mitochondrial (498 aa).

Residues 1 to 9 constitute a mitochondrion transit peptide; the sequence is MLRATLARL. 242–247 contributes to the NAD(+) binding site; that stretch reads GSTAVG. Catalysis depends on Glu265, which acts as the Proton acceptor. Residue Cys299 is the Nucleophile of the active site.

Belongs to the aldehyde dehydrogenase family.

The protein localises to the mitochondrion. The enzyme catalyses an aldehyde + NAD(+) + H2O = a carboxylate + NADH + 2 H(+). The protein operates within alcohol metabolism; ethanol degradation; acetate from ethanol: step 2/2. Functionally, could have an RNA-binding activity in addition of its catalytic role. This chain is Aldehyde dehydrogenase, mitochondrial (ALDH2), found in Leishmania tarentolae (Sauroleishmania tarentolae).